Reading from the N-terminus, the 424-residue chain is Imidazolonepropionase (424 aa).

H81 and H83 together coordinate Fe(3+). Zn(2+) is bound by residues H81 and H83. 3 residues coordinate 4-imidazolone-5-propanoate: R90, Y153, and H186. Residue Y153 participates in N-formimidoyl-L-glutamate binding. A Fe(3+)-binding site is contributed by H251. H251 serves as a coordination point for Zn(2+). E254 serves as a coordination point for 4-imidazolone-5-propanoate. Residue D325 coordinates Fe(3+). Zn(2+) is bound at residue D325. N-formimidoyl-L-glutamate-binding residues include N327 and G329. T330 contributes to the 4-imidazolone-5-propanoate binding site.

Belongs to the metallo-dependent hydrolases superfamily. HutI family. The cofactor is Zn(2+). Fe(3+) is required as a cofactor.

It is found in the cytoplasm. The enzyme catalyses 4-imidazolone-5-propanoate + H2O = N-formimidoyl-L-glutamate. It functions in the pathway amino-acid degradation; L-histidine degradation into L-glutamate; N-formimidoyl-L-glutamate from L-histidine: step 3/3. Its function is as follows. Catalyzes the hydrolytic cleavage of the carbon-nitrogen bond in imidazolone-5-propanoate to yield N-formimidoyl-L-glutamate. It is the third step in the universal histidine degradation pathway. This chain is Imidazolonepropionase, found in Syntrophobacter fumaroxidans (strain DSM 10017 / MPOB).